Here is a 320-residue protein sequence, read N- to C-terminus: Holliday junction branch migration complex subunit RuvB (320 aa).

The interval M1–Y172 is large ATPase domain (RuvB-L). ATP is bound by residues R12, G53, K56, T57, T58, E119–F121, R162, Y172, and R209. T57 serves as a coordination point for Mg(2+). Residues T173–E243 are small ATPAse domain (RuvB-S). The interval E246–G320 is head domain (RuvB-H). The DNA site is built by R301 and R306.

The protein belongs to the RuvB family. In terms of assembly, homohexamer. Forms an RuvA(8)-RuvB(12)-Holliday junction (HJ) complex. HJ DNA is sandwiched between 2 RuvA tetramers; dsDNA enters through RuvA and exits via RuvB. An RuvB hexamer assembles on each DNA strand where it exits the tetramer. Each RuvB hexamer is contacted by two RuvA subunits (via domain III) on 2 adjacent RuvB subunits; this complex drives branch migration. In the full resolvosome a probable DNA-RuvA(4)-RuvB(12)-RuvC(2) complex forms which resolves the HJ.

The protein resides in the cytoplasm. The enzyme catalyses ATP + H2O = ADP + phosphate + H(+). Functionally, the RuvA-RuvB-RuvC complex processes Holliday junction (HJ) DNA during genetic recombination and DNA repair, while the RuvA-RuvB complex plays an important role in the rescue of blocked DNA replication forks via replication fork reversal (RFR). RuvA specifically binds to HJ cruciform DNA, conferring on it an open structure. The RuvB hexamer acts as an ATP-dependent pump, pulling dsDNA into and through the RuvAB complex. RuvB forms 2 homohexamers on either side of HJ DNA bound by 1 or 2 RuvA tetramers; 4 subunits per hexamer contact DNA at a time. Coordinated motions by a converter formed by DNA-disengaged RuvB subunits stimulates ATP hydrolysis and nucleotide exchange. Immobilization of the converter enables RuvB to convert the ATP-contained energy into a lever motion, pulling 2 nucleotides of DNA out of the RuvA tetramer per ATP hydrolyzed, thus driving DNA branch migration. The RuvB motors rotate together with the DNA substrate, which together with the progressing nucleotide cycle form the mechanistic basis for DNA recombination by continuous HJ branch migration. Branch migration allows RuvC to scan DNA until it finds its consensus sequence, where it cleaves and resolves cruciform DNA. This is Holliday junction branch migration complex subunit RuvB from Nitratidesulfovibrio vulgaris (strain ATCC 29579 / DSM 644 / CCUG 34227 / NCIMB 8303 / VKM B-1760 / Hildenborough) (Desulfovibrio vulgaris).